The chain runs to 192 residues: Ion-translocating oxidoreductase complex subunit A (192 aa).

Helical transmembrane passes span 5-25 (ILLI…FLGL), 39-59 (VGMG…AYLV), 63-83 (ILIP…VIAV), 102-122 (LLGI…VALL), 134-154 (VVYG…FAAL), and 171-191 (AIAL…TGLV).

It belongs to the NqrDE/RnfAE family. As to quaternary structure, the complex is composed of six subunits: RnfA, RnfB, RnfC, RnfD, RnfE and RnfG.

It localises to the cell inner membrane. In terms of biological role, part of a membrane-bound complex that couples electron transfer with translocation of ions across the membrane. In Haemophilus influenzae (strain 86-028NP), this protein is Ion-translocating oxidoreductase complex subunit A.